Here is a 525-residue protein sequence, read N- to C-terminus: CBL-interacting protein kinase 21 (525 aa).

Residues 87 to 342 (YEMGRALGEG…ITGIRAHEWF (256 aa)) form the Protein kinase domain. ATP is bound by residues 93–101 (LGEGHFGKV) and Lys-116. Asp-210 (proton acceptor) is an active-site residue. The interval 228 to 257 (DFGLSALPQNQRKDGLLHTTCGSPNYIAPE) is activation loop. Residues 372 to 401 (DIETSPAISQINAFQLIGMSSCLDLSGFFE) enclose the NAF domain. The PPI stretch occupies residues 407 to 436 (ERKIRFVSNYSPTSLFEKIESTVTEKGFQV).

Belongs to the protein kinase superfamily. CAMK Ser/Thr protein kinase family. SNF1 subfamily. The cofactor is Mn(2+).

The enzyme catalyses L-seryl-[protein] + ATP = O-phospho-L-seryl-[protein] + ADP + H(+). The catalysed reaction is L-threonyl-[protein] + ATP = O-phospho-L-threonyl-[protein] + ADP + H(+). CIPK serine-threonine protein kinases interact with CBL proteins. Binding of a CBL protein to the regulatory NAF domain of CIPK protein lead to the activation of the kinase in a calcium-dependent manner. The sequence is that of CBL-interacting protein kinase 21 (CIPK21) from Oryza sativa subsp. japonica (Rice).